The primary structure comprises 358 residues: Phosphoribosyl pyrophosphate synthase-associated protein 2 (358 aa).

The protein belongs to the ribose-phosphate pyrophosphokinase family.

In terms of biological role, seems to play a negative regulatory role in 5-phosphoribose 1-diphosphate synthesis. In Xenopus tropicalis (Western clawed frog), this protein is Phosphoribosyl pyrophosphate synthase-associated protein 2 (prpsap2).